The sequence spans 468 residues: Putative magnesium transporter MRS2-G (468 aa).

Disordered stretches follow at residues 1–76 and 183–204; these read MGRR…AGKV and GQPG…QVPR. 2 stretches are compositionally biased toward low complexity: residues 14–23 and 31–45; these read ASNASTSSST and RLPS…SSPS. Residues 46–67 show a composition bias toward pro residues; that stretch reads PASPSPPPPSASHPAPPSPPLA. Basic and acidic residues predominate over residues 187–201; sequence GDDHGEKHDDSHGDQ. Transmembrane regions (helical) follow at residues 402–422 and 437–457; these read LTLT…GAFA and FFWP…IVLL.

This sequence belongs to the CorA metal ion transporter (MIT) (TC 1.A.35.5) family. As to quaternary structure, interacts with CYCB2-2.

The protein resides in the membrane. Functionally, putative magnesium transporter. The sequence is that of Putative magnesium transporter MRS2-G (MRS2-G) from Oryza sativa subsp. japonica (Rice).